The chain runs to 354 residues: MIETDKLAAERIIAATPSSSHEEVFERALRPRQLDDYVGQEKVRGQLEIFIEAAKRRSEPLDHVLLFGPPGLGKTTLAHIIAREMGVNLRQTSGPVLERAGDLAALLTNLEANDVLFIDEIHRLSPVVEEILYPALEDYQIDIMIGEGPAARSVKLDLQPFTLVGATTRAGMLTNPLRDRFGIVARLEFYDADQLARIVRRSASLLNAHIDPSGALEIAKRSRGTPRIANRLLRRVRDFAEVKADGQITAAVADAALAMLDVDPVGFDLMDRKLLEAILHKFDGGPVGIDNLAAAIGEERDTIEDVLEPYLIQQGFLQRTPRGRVATLLTYRHFGLSAPDAGNERGMWDTPAGK.

A large ATPase domain (RuvB-L) region spans residues 4–190 (TDKLAAERII…FGIVARLEFY (187 aa)). Residues L29, R30, G71, K74, T75, T76, 137–139 (EDY), R180, Y190, and R227 contribute to the ATP site. T75 contacts Mg(2+). Residues 191 to 261 (DADQLARIVR…VADAALAMLD (71 aa)) are small ATPAse domain (RuvB-S). Residues 264–354 (PVGFDLMDRK…RGMWDTPAGK (91 aa)) are head domain (RuvB-H). The DNA site is built by R300, R319, and R324.

This sequence belongs to the RuvB family. Homohexamer. Forms an RuvA(8)-RuvB(12)-Holliday junction (HJ) complex. HJ DNA is sandwiched between 2 RuvA tetramers; dsDNA enters through RuvA and exits via RuvB. An RuvB hexamer assembles on each DNA strand where it exits the tetramer. Each RuvB hexamer is contacted by two RuvA subunits (via domain III) on 2 adjacent RuvB subunits; this complex drives branch migration. In the full resolvosome a probable DNA-RuvA(4)-RuvB(12)-RuvC(2) complex forms which resolves the HJ.

The protein resides in the cytoplasm. The catalysed reaction is ATP + H2O = ADP + phosphate + H(+). The RuvA-RuvB-RuvC complex processes Holliday junction (HJ) DNA during genetic recombination and DNA repair, while the RuvA-RuvB complex plays an important role in the rescue of blocked DNA replication forks via replication fork reversal (RFR). RuvA specifically binds to HJ cruciform DNA, conferring on it an open structure. The RuvB hexamer acts as an ATP-dependent pump, pulling dsDNA into and through the RuvAB complex. RuvB forms 2 homohexamers on either side of HJ DNA bound by 1 or 2 RuvA tetramers; 4 subunits per hexamer contact DNA at a time. Coordinated motions by a converter formed by DNA-disengaged RuvB subunits stimulates ATP hydrolysis and nucleotide exchange. Immobilization of the converter enables RuvB to convert the ATP-contained energy into a lever motion, pulling 2 nucleotides of DNA out of the RuvA tetramer per ATP hydrolyzed, thus driving DNA branch migration. The RuvB motors rotate together with the DNA substrate, which together with the progressing nucleotide cycle form the mechanistic basis for DNA recombination by continuous HJ branch migration. Branch migration allows RuvC to scan DNA until it finds its consensus sequence, where it cleaves and resolves cruciform DNA. This chain is Holliday junction branch migration complex subunit RuvB, found in Burkholderia ambifaria (strain MC40-6).